The sequence spans 858 residues: KN motif and ankyrin repeat domain-containing protein 2 (858 aa).

Residues 1-29 (MAQVLHVSAPFPGTPGPASPPAFPSKEPD) are disordered. Positions 1–72 (MAQVLHVSAP…AVQRRPRLGS (72 aa)) are interaction with AIFM1. Over residues 12-23 (PGTPGPASPPAF) the composition is skewed to pro residues. Residues Ser19, Ser83, Ser86, Ser89, and Ser92 each carry the phosphoserine modification. Omega-N-methylarginine is present on Arg105. The segment at 140 to 182 (AAPAGLGSLTPSAAGSTSSLVGVGLPPPTPRGSGLSTPVPPSA) is disordered. Over residues 148–159 (LTPSAAGSTSSL) the composition is skewed to polar residues. Position 168 is a phosphothreonine (Thr168). Coiled coils occupy residues 183–234 (GHLA…KSQK) and 282–313 (EAAL…QADL). Ser323 bears the Phosphoserine mark. Position 329 is a phosphothreonine (Thr329). A phosphoserine mark is found at Ser356 and Ser375. Disordered regions lie at residues 412–451 (CDGA…PAHD) and 488–590 (QKEE…SSAK). Positions 421-435 (APAESSLSPPESEGA) are enriched in low complexity. Positions 436-446 (TQAQPEKNTGQ) are enriched in polar residues. Basic and acidic residues predominate over residues 488–499 (QKEEPTDPEAHR). Residues 509–528 (GSISPRYESSSEDSSTAENF) show a composition bias toward low complexity. Phosphoserine is present on Ser547. Residues 555–569 (RPKETAKAKTSREES) show a composition bias toward basic and acidic residues. Thr559 carries the post-translational modification Phosphothreonine. One copy of the ANK 0; degenerate repeat lies at 621–658 (RELKVAYTTVLQEWLRLACRSDAHPELVRRHLVTFRAM). ANK repeat units follow at residues 673–703 (NGNT…QVDK), 707–740 (AGYS…DVNA), 745–774 (AGQT…DVNV), 778–808 (DGST…DISI), and 812–842 (DGST…KCSF). The interaction with NCOA1 stretch occupies residues 676 to 842 (TALHYSVSHA…YSRMNIKCSF (167 aa)).

In terms of assembly, interacts (non-phosphorylated form) with NCOA1; NCOA2 AND NCOA3. Interacts with AIFM1. Interacts with ARHGDIA; the interaction is direct and may regulate the interaction of ARHGDIA with RHOA, RAC1 and CDC42. Interacts (via ANK repeats 1-5) with KIF21A. Phosphorylated by casein kinase II upon estrogen stimulation. Phosphorylation induces the release by KANK2 of NCOA1 and its translocation to the nucleus where NCOA1 can activate gene transcription.

Its subcellular location is the cytoplasm. The protein localises to the mitochondrion. Involved in transcription regulation by sequestering in the cytoplasm nuclear receptor coactivators such as NCOA1, NCOA2 and NCOA3. Involved in regulation of caspase-independent apoptosis by sequestering the proapoptotic factor AIFM1 in mitochondria. Pro-apoptotic stimuli can induce its proteasomal degradation allowing the translocation of AIFM1 to the nucleus to induce apoptosis. Involved in the negative control of vitamin D receptor signaling pathway. Involved in actin stress fibers formation through its interaction with ARHGDIA and the regulation of the Rho signaling pathway. May thereby play a role in cell adhesion and migration, regulating for instance podocytes migration during development of the kidney. Through the Rho signaling pathway may also regulate cell proliferation. This Bos taurus (Bovine) protein is KN motif and ankyrin repeat domain-containing protein 2 (KANK2).